Consider the following 114-residue polypeptide: Hemerythrin subunit 1 (114 aa).

Residues histidine 26, histidine 55, glutamate 59, histidine 74, histidine 78, histidine 102, and aspartate 107 each contribute to the Fe cation site.

Belongs to the hemerythrin family.

Its function is as follows. Hemerythrin is a respiratory protein in blood cells of certain marine worms. The oxygen-binding site in each chain contains two iron atoms. The sequence is that of Hemerythrin subunit 1 from Golfingia vulgaris (Marine worm).